Consider the following 540-residue polypeptide: Ipecac alkaloid beta-glucosidase 9 (540 aa).

A beta-D-glucoside is bound by residues Gln-36, His-140, 185-186, Tyr-350, Glu-421, Trp-470, and Phe-486; that span reads NE. Glu-186 (proton donor) is an active-site residue. Glu-421 acts as the Nucleophile in catalysis.

The protein belongs to the glycosyl hydrolase 1 family.

It is found in the cytoplasm. The protein localises to the cytosol. The enzyme catalyses deacetylipecoside + H2O = deacetylipecoside aglycone + D-glucose. The catalysed reaction is deacetylisoipecoside + H2O = deacetylisoipecoside aglycone + D-glucose. It functions in the pathway alkaloid biosynthesis. In terms of biological role, beta-glucosidase catalyzing deglucosylation on N-deacetylisoipecoside and N-deacetylipecoside. This Carapichea ipecacuanha (Ipecac) protein is Ipecac alkaloid beta-glucosidase 9.